A 292-amino-acid polypeptide reads, in one-letter code: Acetylglutamate kinase (292 aa).

Substrate-binding positions include 64 to 65 (GG), R86, and N190.

This sequence belongs to the acetylglutamate kinase family. ArgB subfamily.

It is found in the cytoplasm. It carries out the reaction N-acetyl-L-glutamate + ATP = N-acetyl-L-glutamyl 5-phosphate + ADP. The protein operates within amino-acid biosynthesis; L-arginine biosynthesis; N(2)-acetyl-L-ornithine from L-glutamate: step 2/4. In terms of biological role, catalyzes the ATP-dependent phosphorylation of N-acetyl-L-glutamate. The sequence is that of Acetylglutamate kinase from Citrifermentans bemidjiense (strain ATCC BAA-1014 / DSM 16622 / JCM 12645 / Bem) (Geobacter bemidjiensis).